Reading from the N-terminus, the 338-residue chain is Glyceraldehyde-3-phosphate dehydrogenase (338 aa).

NAD(+)-binding positions include 13–14 (RI), Asp-35, and Arg-80. D-glyceraldehyde 3-phosphate-binding positions include 151-153 (SCT), Thr-182, 211-212 (TG), and Arg-234. Cys-152 acts as the Nucleophile in catalysis. Asn-316 serves as a coordination point for NAD(+).

Belongs to the glyceraldehyde-3-phosphate dehydrogenase family. As to quaternary structure, homotetramer.

It is found in the cytoplasm. It carries out the reaction D-glyceraldehyde 3-phosphate + phosphate + NAD(+) = (2R)-3-phospho-glyceroyl phosphate + NADH + H(+). The protein operates within carbohydrate degradation; glycolysis; pyruvate from D-glyceraldehyde 3-phosphate: step 1/5. The polypeptide is Glyceraldehyde-3-phosphate dehydrogenase (GPD) (Sclerotinia sclerotiorum (White mold)).